A 509-amino-acid chain; its full sequence is Lysine--tRNA ligase (509 aa).

Glutamate 417 and glutamate 424 together coordinate Mg(2+).

This sequence belongs to the class-II aminoacyl-tRNA synthetase family. Homodimer. Requires Mg(2+) as cofactor.

The protein localises to the cytoplasm. It carries out the reaction tRNA(Lys) + L-lysine + ATP = L-lysyl-tRNA(Lys) + AMP + diphosphate. The polypeptide is Lysine--tRNA ligase (Blochmanniella pennsylvanica (strain BPEN)).